The primary structure comprises 191 residues: MNNSKLKQYVQLVQTANQNFNLTGLKTEGEIYEHLVQEIIELFNEYDSYFDHKKVADLGSGNGCPGVILKLLFPQIKTLDLIDSKHKKVNFLKEVIQTLELNNTQALCARIENHTEQYDTLCSRGLGSIIEVNAFALKLLKPNGIIFHIKQSLDQYLEFEDSEQKDQFKPLFFKFFHGKRQQILIAMKKNV.

S-adenosyl-L-methionine-binding positions include Gly59, 111 to 112, and Arg124; that span reads IE.

Belongs to the methyltransferase superfamily. RNA methyltransferase RsmG family.

The protein localises to the cytoplasm. Specifically methylates the N7 position of a guanine in 16S rRNA. The polypeptide is Ribosomal RNA small subunit methyltransferase G (Mycoplasma pneumoniae (strain ATCC 29342 / M129 / Subtype 1) (Mycoplasmoides pneumoniae)).